The following is a 390-amino-acid chain: Alkanesulfonate monooxygenase 1 (390 aa).

Residues 364–390 (TGSSVNTGPFGETIAGDHRPKSLASAS) form a disordered region.

The protein belongs to the SsuD family.

The catalysed reaction is an alkanesulfonate + FMNH2 + O2 = an aldehyde + FMN + sulfite + H2O + 2 H(+). Its function is as follows. Catalyzes the desulfonation of aliphatic sulfonates. In Mesorhizobium japonicum (strain LMG 29417 / CECT 9101 / MAFF 303099) (Mesorhizobium loti (strain MAFF 303099)), this protein is Alkanesulfonate monooxygenase 1 (ssuD1).